Reading from the N-terminus, the 1278-residue chain is Mediator of RNA polymerase II transcription subunit 16 (1278 aa).

Over residues 1-10 (MNQQNPEEEV) the composition is skewed to acidic residues. Disordered stretches follow at residues 1–21 (MNQQ…GGGI), 530–557 (TKDF…GDEK), and 839–861 (SAGT…SPAT). Residues 547–557 (APKEPDSGDEK) show a composition bias toward basic and acidic residues. Residues 841–861 (GTGSNRNNVTSPTQNASSPAT) show a composition bias toward polar residues.

This sequence belongs to the plant Mediator complex subunit 16 family. As to quaternary structure, component of the Mediator complex.

Its subcellular location is the nucleus. Its function is as follows. Component of the Mediator complex, a coactivator involved in the regulated transcription of nearly all RNA polymerase II-dependent genes. Mediator functions as a bridge to convey information from gene-specific regulatory proteins to the basal RNA polymerase II transcription machinery. The Mediator complex, having a compact conformation in its free form, is recruited to promoters by direct interactions with regulatory proteins and serves for the assembly of a functional preinitiation complex with RNA polymerase II and the general transcription factors. Involved in the regulation of the circadian clock, in the control of flowering time, in freezing- and osmotic-stress tolerance and in both salicylic acid- and jasmonate-mediated defense gene expression. The sequence is that of Mediator of RNA polymerase II transcription subunit 16 (MED16) from Arabidopsis thaliana (Mouse-ear cress).